A 119-amino-acid polypeptide reads, in one-letter code: Immunoglobulin heavy variable 2-70 (119 aa).

The signal sequence occupies residues 1-19; it reads MDILCSTLLLLTVPSWVLS. Q20 bears the Pyrrolidone carboxylic acid mark. The tract at residues 20 to 44 is framework-1; sequence QVTLRESGPALVKPTQTLTLTCTFS. The Ig-like domain occupies 20–119; that stretch reads QVTLRESGPA…DTATYYCARI (100 aa). A disulfide bond links C41 and C116. Positions 45–54 are complementarity-determining-1; it reads GFSLSTSGMC. Residues 55–71 form a framework-2 region; it reads VSWIRQPPGKALEWLAL. The segment at 72–78 is complementarity-determining-2; sequence IDWDDDK. The framework-3 stretch occupies residues 79 to 116; the sequence is YYSTSLKTRLTISKDTSKNQVVLTMTNMDPVDTATYYC. The segment at 117-119 is complementarity-determining-3; that stretch reads ARI.

As to quaternary structure, immunoglobulins are composed of two identical heavy chains and two identical light chains; disulfide-linked.

Its subcellular location is the secreted. It localises to the cell membrane. In terms of biological role, v region of the variable domain of immunoglobulin heavy chains that participates in the antigen recognition. Immunoglobulins, also known as antibodies, are membrane-bound or secreted glycoproteins produced by B lymphocytes. In the recognition phase of humoral immunity, the membrane-bound immunoglobulins serve as receptors which, upon binding of a specific antigen, trigger the clonal expansion and differentiation of B lymphocytes into immunoglobulins-secreting plasma cells. Secreted immunoglobulins mediate the effector phase of humoral immunity, which results in the elimination of bound antigens. The antigen binding site is formed by the variable domain of one heavy chain, together with that of its associated light chain. Thus, each immunoglobulin has two antigen binding sites with remarkable affinity for a particular antigen. The variable domains are assembled by a process called V-(D)-J rearrangement and can then be subjected to somatic hypermutations which, after exposure to antigen and selection, allow affinity maturation for a particular antigen. The sequence is that of Immunoglobulin heavy variable 2-70 from Homo sapiens (Human).